Reading from the N-terminus, the 439-residue chain is Ribosomal protein uS12 methylthiotransferase RimO (439 aa).

In terms of domain architecture, MTTase N-terminal spans 7-119 (KQLCLISLGC…IDIMIAKKQN (113 aa)). The [4Fe-4S] cluster site is built by C16, C50, C82, C151, C155, and C158. Residues 137-365 (TGSSVHAYVK…NKIALKHQNN (229 aa)) enclose the Radical SAM core domain.

The protein belongs to the methylthiotransferase family. RimO subfamily. [4Fe-4S] cluster is required as a cofactor.

It localises to the cytoplasm. It catalyses the reaction L-aspartate(89)-[ribosomal protein uS12]-hydrogen + (sulfur carrier)-SH + AH2 + 2 S-adenosyl-L-methionine = 3-methylsulfanyl-L-aspartate(89)-[ribosomal protein uS12]-hydrogen + (sulfur carrier)-H + 5'-deoxyadenosine + L-methionine + A + S-adenosyl-L-homocysteine + 2 H(+). In terms of biological role, catalyzes the methylthiolation of an aspartic acid residue of ribosomal protein uS12. The chain is Ribosomal protein uS12 methylthiotransferase RimO from Helicobacter pylori (strain Shi470).